We begin with the raw amino-acid sequence, 187 residues long: Cytokinin riboside 5'-monophosphate phosphoribohydrolase (187 aa).

Substrate-binding positions include glutamate 80, 98–99 (RK), 115–121 (GVGTLDE), and threonine 127.

Belongs to the LOG family.

It catalyses the reaction N(6)-(dimethylallyl)adenosine 5'-phosphate + H2O = N(6)-dimethylallyladenine + D-ribose 5-phosphate. The enzyme catalyses 9-ribosyl-trans-zeatin 5'-phosphate + H2O = trans-zeatin + D-ribose 5-phosphate. Catalyzes the hydrolytic removal of ribose 5'-monophosphate from nitrogen N6-modified adenosines, the final step of bioactive cytokinin synthesis. The sequence is that of Cytokinin riboside 5'-monophosphate phosphoribohydrolase from Mycobacterium marinum (strain ATCC BAA-535 / M).